We begin with the raw amino-acid sequence, 446 residues long: Divalent metal cation transporter MntH (446 aa).

11 helical membrane-spanning segments follow: residues 32 to 52 (LAFL…GNWI), 59 to 79 (AQFG…AMLL), 107 to 127 (AIIF…AEVI), 139 to 159 (IPLI…LFIM), 168 to 188 (AIVG…VYIS), 205 to 225 (IIAN…TIMP), 264 to 284 (SIAF…FYGV), 303 to 323 (PVLG…ALLA), 355 to 375 (LVTR…FRGN), 381 to 401 (QLLV…LIPL), and 420 to 440 (VNIC…YLII).

The protein belongs to the NRAMP family.

The protein resides in the cell membrane. H(+)-stimulated, divalent metal cation uptake system. The protein is Divalent metal cation transporter MntH of Staphylococcus haemolyticus (strain JCSC1435).